The primary structure comprises 571 residues: MDTQSSIGNEEWRIAGTSVVSGMALGKVFFLGTSPLHVRELTLPQEEVEHEIHRYYKALNRSKSDIVALEQEVTGQQGLQEVSSILQAHLEIMKDPLLTEEVVNTIRKDRKNAEYVFSSVMGKIEESLTAVRGMPSVVDRVQDIHDISNRVIGHLCCQHKSSLGESDQNLIIFSEELTPSEVASANSAYIRGFVSLVGAATSHTAIVSRAKSIPYLANISEELWNIAKRYNGKLVLIDGYRGELIFNPKPATLQSCYKKELSVVAHTSQRLVRKSLHPIVSSHAGSDKDVEDLLENFPQTSIGLFRSEFLAVILGRLPTLREQVDLYEKLARFPGDSPSVLRLFDFGEDKPCPGIKNKKERSIRWLLDYSVILEDQLQAIAKASLQGSIKVLIPGVSDVSEIIEVKKKWETIQTRFPKGHKVSWGTMIEFPSAVWMIEEILPECDFLSIGTNDLVQYTLGISRESALPKHLNVTLPPAVIRMIHHVLQAAKQNQVPVSICGEAAGQLSLTPLFIGLGVQELSVAMPVINRLRNHIALLELNSCLEITEALLQAKTCSEVEELLNRNNKITS.

The active-site Tele-phosphohistidine intermediate is H203. The phosphoenolpyruvate site is built by R306 and R342. Residues E429 and D453 each contribute to the Mg(2+) site. Residues 452–453 and R463 each bind phosphoenolpyruvate; that span reads ND. Catalysis depends on C500, which acts as the Proton donor.

Belongs to the PEP-utilizing enzyme family. In terms of assembly, homodimer. Requires Mg(2+) as cofactor.

It is found in the cytoplasm. It catalyses the reaction L-histidyl-[protein] + phosphoenolpyruvate = N(pros)-phospho-L-histidyl-[protein] + pyruvate. In terms of biological role, general (non sugar-specific) component of the phosphoenolpyruvate-dependent sugar phosphotransferase system (sugar PTS). This major carbohydrate active-transport system catalyzes the phosphorylation of incoming sugar substrates concomitantly with their translocation across the cell membrane. Enzyme I transfers the phosphoryl group from phosphoenolpyruvate (PEP) to the phosphoryl carrier protein (HPr). This is Phosphoenolpyruvate-protein phosphotransferase (ptsI) from Chlamydia pneumoniae (Chlamydophila pneumoniae).